The following is a 177-amino-acid chain: Peptide deformylase (177 aa).

2 residues coordinate Fe cation: C99 and H141. Residue E142 is part of the active site. H145 contributes to the Fe cation binding site.

This sequence belongs to the polypeptide deformylase family. Fe(2+) is required as a cofactor.

It carries out the reaction N-terminal N-formyl-L-methionyl-[peptide] + H2O = N-terminal L-methionyl-[peptide] + formate. In terms of biological role, removes the formyl group from the N-terminal Met of newly synthesized proteins. Requires at least a dipeptide for an efficient rate of reaction. N-terminal L-methionine is a prerequisite for activity but the enzyme has broad specificity at other positions. This is Peptide deformylase from Rhizorhabdus wittichii (strain DSM 6014 / CCUG 31198 / JCM 15750 / NBRC 105917 / EY 4224 / RW1) (Sphingomonas wittichii).